A 201-amino-acid chain; its full sequence is IMP cyclohydrolase (201 aa).

This sequence belongs to the archaeal IMP cyclohydrolase family.

The enzyme catalyses IMP + H2O = 5-formamido-1-(5-phospho-D-ribosyl)imidazole-4-carboxamide. The protein operates within purine metabolism; IMP biosynthesis via de novo pathway; IMP from 5-formamido-1-(5-phospho-D-ribosyl)imidazole-4-carboxamide: step 1/1. In terms of biological role, catalyzes the cyclization of 5-formylamidoimidazole-4-carboxamide ribonucleotide to IMP. This is IMP cyclohydrolase from Methanococcus maripaludis (strain DSM 14266 / JCM 13030 / NBRC 101832 / S2 / LL).